We begin with the raw amino-acid sequence, 219 residues long: Large ribosomal subunit protein bL25 (219 aa).

The disordered stretch occupies residues valine 193 to glutamate 219. Residues valine 209 to glutamate 219 are compositionally biased toward polar residues.

The protein belongs to the bacterial ribosomal protein bL25 family. CTC subfamily. As to quaternary structure, part of the 50S ribosomal subunit; part of the 5S rRNA/L5/L18/L25 subcomplex. Contacts the 5S rRNA. Binds to the 5S rRNA independently of L5 and L18.

This is one of the proteins that binds to the 5S RNA in the ribosome where it forms part of the central protuberance. The protein is Large ribosomal subunit protein bL25 of Legionella pneumophila (strain Corby).